Reading from the N-terminus, the 674-residue chain is Putative kinase-like protein TMKL1 (674 aa).

The first 25 residues, 1–25 (MGMEALRFLHVIFFFVLILHCHCGT), serve as a signal peptide directing secretion. Topologically, residues 26-295 (SLSGSSDVKL…PLKPCLGSSR (270 aa)) are extracellular. Residues Asn57, Asn90, Asn95, and Asn110 are each glycosylated (N-linked (GlcNAc...) asparagine). LRR repeat units lie at residues 100–122 (HLLS…IGEF), 124–146 (MLQS…LGYT), 148–169 (SLSD…SIWN), and 173–194 (KLVS…PALP). Asn183 and Asn195 each carry an N-linked (GlcNAc...) asparagine glycan. LRR repeat units follow at residues 200-222 (NLQV…ITRF), 224-244 (GVKS…EGLG), and 247-269 (ELES…GESK). N-linked (GlcNAc...) asparagine glycosylation is found at Asn252 and Asn257. Residues 296-323 (LSPGAVAGLVIGLMSGAVVVASLLIGYL) traverse the membrane as a helical segment. Residues 324–674 (QNKKRKSSIE…ETRSDAETPF (351 aa)) lie on the Cytoplasmic side of the membrane. The disordered stretch occupies residues 331-350 (SIESEDDLEEGDEEDEIGEK). Positions 333-348 (ESEDDLEEGDEEDEIG) are enriched in acidic residues. At Ser334 the chain carries Phosphoserine. The Protein kinase domain occupies 373–674 (NATGQVMEKT…ETRSDAETPF (302 aa)). The residue at position 375 (Thr375) is a Phosphothreonine. A Phosphoserine modification is found at Ser454. The segment at 649 to 674 (LEENRPRNRSALYSPTETRSDAETPF) is disordered.

This sequence belongs to the protein kinase superfamily.

Its subcellular location is the membrane. In terms of biological role, does not seem to have conserved a kinase activity. This chain is Putative kinase-like protein TMKL1 (TMKL1), found in Arabidopsis thaliana (Mouse-ear cress).